The following is a 301-amino-acid chain: MQKAELITAIVTPFNDRDEIDYGVMQRLVDHLIAEGTDGFVVGATTGEGPTLSHPEKITLYTRFADMVHGRALVIANSGSNNTKETAAFTHEVGGIAGIDATLVVVPYYNKPDQNGMIAHYTAVAAAAQKPIVIYNIPGRTGVDMLPATVATLAQNPMIQGIKQCGSLPALSDIIDRTKHDAFNVWTGEDAQALNIKTLGGMGVISVAAHLYAHSIREMYAALDRGDITTVAALQRQLLPKMAALFHFPSPAPTKAALNALGFQVGSPRLPLLPLNASQQQELAHLLGVPELSAIEAEVLA.

Thr46 contacts pyruvate. The active-site Proton donor/acceptor is Tyr135. Lys163 (schiff-base intermediate with substrate) is an active-site residue. Residue Ile205 participates in pyruvate binding.

Belongs to the DapA family. Homotetramer; dimer of dimers.

It localises to the cytoplasm. The catalysed reaction is L-aspartate 4-semialdehyde + pyruvate = (2S,4S)-4-hydroxy-2,3,4,5-tetrahydrodipicolinate + H2O + H(+). The protein operates within amino-acid biosynthesis; L-lysine biosynthesis via DAP pathway; (S)-tetrahydrodipicolinate from L-aspartate: step 3/4. In terms of biological role, catalyzes the condensation of (S)-aspartate-beta-semialdehyde [(S)-ASA] and pyruvate to 4-hydroxy-tetrahydrodipicolinate (HTPA). This is 4-hydroxy-tetrahydrodipicolinate synthase from Lacticaseibacillus casei (strain BL23) (Lactobacillus casei).